The primary structure comprises 71 residues: uncharacterized protein (71 aa).

The segment at 1–71 is disordered; sequence MLFETLKSLS…AFFSRPFYSE (71 aa). Residues 7 to 33 are compositionally biased toward polar residues; sequence KSLSQQNGGQFSDEQSFESPISSSFNG. Low complexity predominate over residues 35–65; sequence SMPFGSPSSTMSSSYKGNTNSSTKSSSAFFS.

This is an uncharacterized protein from Dictyostelium discoideum (Social amoeba).